Here is an 832-residue protein sequence, read N- to C-terminus: Mechanosensitive cation channel TMEM63B (832 aa).

Residues 1–40 are Extracellular-facing; sequence MLPFLLATLGTAALNSSNPKDYCYSARIRSTVLQGLPFGG. A helical transmembrane segment spans residues 41–65; sequence VPTVLALDFMCFLALLFLFSILRKV. Cys51 carries S-palmitoyl cysteine lipidation. At 66-145 the chain is on the cytoplasmic side; sequence AWDYGRLALV…KDDEIRDKCG (80 aa). A Mediates endoplasmic reticulum retention motif is present at residues 86–88; that stretch reads RER. A phosphoserine mark is found at Ser111, Ser113, Ser114, and Ser115. Cys126 is lipidated: S-palmitoyl cysteine. Residues 146–178 traverse the membrane as a helical segment; the sequence is GDAVHYLSFQRHIIGLLVVVGVLSVGIVLPVNF. At 179-202 the chain is on the extracellular side; that stretch reads SGDLLENNAYSFGRTTIANLKSGN. A helical transmembrane segment spans residues 203–227; sequence NLLWLHTSFAFLYLLLTVYSMRRHT. The Cytoplasmic segment spans residues 228–427; it reads SKMRYKEDDL…IYWEHLSIRG (200 aa). The interval 231-426 is intracellular linker IL2; confers mechanosensitivity; it reads RYKEDDLVKR…NIYWEHLSIR (196 aa). 2 S-palmitoyl cysteine lipidation sites follow: Cys382 and Cys398. A helical membrane pass occupies residues 428–457; it reads FIWWLRCLVINVVLFILLFFLTTPAIIITT. Residues 458 to 472 are Extracellular-facing; it reads MDKFNVTKPVEYLNN. N-linked (GlcNAc...) asparagine glycosylation is present at Asn462. The helical transmembrane segment at 473-502 threads the bilayer; sequence PIITQFFPTLLLWCFSALLPTIVYYSAFFE. Residues 503–506 are Cytoplasmic-facing; the sequence is AHWT. Residues 507 to 543 form a helical membrane-spanning segment; the sequence is RSGENRTTMHKCYTFLIFMVLLLPSLGLSSLDLFFRW. At 544-566 the chain is on the extracellular side; that stretch reads LFDKKFLAEAAIRFECVFLPDNG. Residues 567–599 traverse the membrane as a helical segment; the sequence is AFFVNYVIASAFIGNAMDLLRIPGLLMYMIRLC. Residues 567 to 599 are gating helix; it reads AFFVNYVIASAFIGNAMDLLRIPGLLMYMIRLC. The Cytoplasmic portion of the chain corresponds to 600-619; the sequence is LARSAAERRNVKRHQAYEFQ. The helical transmembrane segment at 620 to 638 threads the bilayer; the sequence is FGAAYAWMMCVFTVVMTYS. At 639–641 the chain is on the extracellular side; sequence ITC. The helical transmembrane segment at 642–666 threads the bilayer; sequence PIIVPFGLMYMLLKHLVDRYNLYYA. Residues 667–673 are Cytoplasmic-facing; sequence YLPAKLD. The helical transmembrane segment at 674–702 threads the bilayer; the sequence is KKIHSGAVNQVVAAPILCLFWLLFFSTMR. The Extracellular portion of the chain corresponds to 703-707; the sequence is TGFLA. The chain crosses the membrane as a helical span at residues 708 to 728; that stretch reads PTSMFTFVVLVITIVICLCHV. 2 S-palmitoyl cysteine lipidation sites follow: Cys726 and Cys729. Topologically, residues 729–832 are cytoplasmic; sequence CFGHFKYLSA…DSLIENEIHQ (104 aa). Disordered stretches follow at residues 748–767 and 776–818; these read TDAVSSRSNGRPPTAGAVPK and LQDS…DTDF. Residues 749–758 are compositionally biased toward polar residues; that stretch reads DAVSSRSNGR. The segment covering 789-801 has biased composition (low complexity); that stretch reads PGSSGDEPPSSSS.

The protein belongs to the CSC1 (TC 1.A.17) family. In terms of assembly, monomer. Interacts with SLC19A2; interaction is required for the phospholipid scramblase activity. Post-translationally, palmitoylation is required for localization to the plasma membrane and stability. Expressed in cochlear hair cells (at protein level). Highly expressed in the subfornical organ of the brain. Expressed in small intestine. As to expression, brain-specific.

It is found in the cell membrane. The protein localises to the endoplasmic reticulum membrane. Its subcellular location is the lysosome membrane. It localises to the early endosome membrane. The catalysed reaction is Ca(2+)(in) = Ca(2+)(out). It carries out the reaction Mg(2+)(in) = Mg(2+)(out). The enzyme catalyses K(+)(in) = K(+)(out). It catalyses the reaction Na(+)(in) = Na(+)(out). The catalysed reaction is Cs(+)(in) = Cs(+)(out). It carries out the reaction a 1,2-diacyl-sn-glycero-3-phosphocholine(in) = a 1,2-diacyl-sn-glycero-3-phosphocholine(out). The enzyme catalyses a sphingomyelin(in) = a sphingomyelin(out). In terms of biological role, mechanosensitive cation channel with low conductance and high activation threshold. Osmosensitive cation channel preferentially activated by hypotonic stress. Also acts as a phospholipid scramblase in response to changes in membrane structure: upon changes in membrane curvature and thickness, alters its conformation and translocates phospholipids, such as phosphatidylcholine and sphingomyelin, thereby controlling plasma membrane lipid distribution. Forms a heterodimer with SLC19A2, which mediates phospholipid scramblase activity following Ca(2+) stimulation. Expressed in excitatory neurons of the subfornical organ and functions as a thirst receptor that mediates neuronal response to hyperosmolality to drive thirst and drinking behavior. Facilitates intestinal motility by promoting proliferation of intestinal stem cells. Essential for the baby's first breath and respiration throughout life. Upon lung inflation conducts cation currents in alveolar type 1 and 2 cells triggering lamellar body exocytosis and surfactant secretion into airspace. Acts as an osmosensor in cochlear outer hair cells (OHCs) where it mediates calcium influx and regulatory volume decrease response. Required for the maintenance of OHC morphology, OHC survival and normal hearing. Its function is as follows. Brain-specific osmosensitive calcium channel isoform. This is Mechanosensitive cation channel TMEM63B from Mus musculus (Mouse).